A 258-amino-acid chain; its full sequence is Putative [LysW]-aminoadipate/[LysW]-glutamate kinase (258 aa).

Substrate is bound by residues 33–34 (GG), Arg-60, and Asn-164.

It belongs to the acetylglutamate kinase family. LysZ subfamily.

The protein resides in the cytoplasm. It catalyses the reaction [amino-group carrier protein]-C-terminal-N-(1,4-dicarboxybutan-1-yl)-L-glutamine + ATP = [amino-group carrier protein]-C-terminal-N-(1-carboxy-5-phosphooxy-5-oxopentan-1-yl)-L-glutamine + ADP. The catalysed reaction is [amino-group carrier protein]-C-terminal-gamma-(L-glutamyl)-L-glutamate + ATP = [amino-group carrier protein]-C-terminal-gamma-(5-phospho-L-glutamyl)-L-glutamate + ADP. Its pathway is amino-acid biosynthesis; L-lysine biosynthesis via AAA pathway; L-lysine from L-alpha-aminoadipate (Thermus route): step 2/5. It participates in amino-acid biosynthesis; L-arginine biosynthesis. Functionally, involved in both the arginine and lysine biosynthetic pathways. Phosphorylates the LysW-bound precursors glutamate (for arginine biosynthesis), respectively alpha-aminoadipate (for lysine biosynthesis). This is Putative [LysW]-aminoadipate/[LysW]-glutamate kinase from Caldivirga maquilingensis (strain ATCC 700844 / DSM 13496 / JCM 10307 / IC-167).